We begin with the raw amino-acid sequence, 115 residues long: uncharacterized protein (115 aa).

The N-terminal stretch at 1-20 (MKTFFRTVLFGSLMAVCANS) is a signal peptide.

This is an uncharacterized protein from Escherichia coli O6:H1 (strain CFT073 / ATCC 700928 / UPEC).